Consider the following 94-residue polypeptide: Acylphosphatase (94 aa).

The Acylphosphatase-like domain occupies 8 to 94 (RLTAWVHGRV…REQITGFHER (87 aa)). Active-site residues include Arg23 and Asn41.

This sequence belongs to the acylphosphatase family.

The catalysed reaction is an acyl phosphate + H2O = a carboxylate + phosphate + H(+). The chain is Acylphosphatase (acyP) from Mycobacterium sp. (strain KMS).